Consider the following 318-residue polypeptide: UDP-3-O-acylglucosamine N-acyltransferase (318 aa).

Residue H231 is the Proton acceptor of the active site.

Belongs to the transferase hexapeptide repeat family. LpxD subfamily. As to quaternary structure, homotrimer.

The catalysed reaction is a UDP-3-O-[(3R)-3-hydroxyacyl]-alpha-D-glucosamine + a (3R)-hydroxyacyl-[ACP] = a UDP-2-N,3-O-bis[(3R)-3-hydroxyacyl]-alpha-D-glucosamine + holo-[ACP] + H(+). The protein operates within bacterial outer membrane biogenesis; LPS lipid A biosynthesis. Catalyzes the N-acylation of UDP-3-O-acylglucosamine using 3-hydroxyacyl-ACP as the acyl donor. Is involved in the biosynthesis of lipid A, a phosphorylated glycolipid that anchors the lipopolysaccharide to the outer membrane of the cell. The chain is UDP-3-O-acylglucosamine N-acyltransferase from Campylobacter jejuni subsp. doylei (strain ATCC BAA-1458 / RM4099 / 269.97).